The sequence spans 113 residues: uncharacterized protein (113 aa).

The helical transmembrane segment at 7-29 (FFILIVLLFTVFSLKEFIPNTFC) threads the bilayer.

It localises to the membrane. This is an uncharacterized protein from Aquifex aeolicus (strain VF5).